Reading from the N-terminus, the 1198-residue chain is Integrator complex subunit 2 (1198 aa).

The chain crosses the membrane as a helical span at residues 421–437 (FVSLSFCMLLAFSTLVS).

This sequence belongs to the Integrator subunit 2 family. Component of the Integrator complex, composed of core subunits INTS1, INTS2, INTS3, INTS4, INTS5, INTS6, INTS7, INTS8, INTS9/RC74, INTS10, INTS11/CPSF3L, INTS12, INTS13, INTS14 and INTS15. The core complex associates with protein phosphatase 2A subunits PPP2CA and PPP2R1A, to form the Integrator-PP2A (INTAC) complex.

The protein localises to the nucleus. Its subcellular location is the nucleus membrane. The protein resides in the cytoplasm. Its function is as follows. Component of the integrator complex, a multiprotein complex that terminates RNA polymerase II (Pol II) transcription in the promoter-proximal region of genes. The integrator complex provides a quality checkpoint during transcription elongation by driving premature transcription termination of transcripts that are unfavorably configured for transcriptional elongation: the complex terminates transcription by (1) catalyzing dephosphorylation of the C-terminal domain (CTD) of Pol II subunit POLR2A/RPB1 and SUPT5H/SPT5, (2) degrading the exiting nascent RNA transcript via endonuclease activity and (3) promoting the release of Pol II from bound DNA. The integrator complex is also involved in terminating the synthesis of non-coding Pol II transcripts, such as enhancer RNAs (eRNAs), small nuclear RNAs (snRNAs), telomerase RNAs and long non-coding RNAs (lncRNAs). Mediates recruitment of cytoplasmic dynein to the nuclear envelope, probably as component of the integrator complex. In Mus musculus (Mouse), this protein is Integrator complex subunit 2 (Ints2).